Reading from the N-terminus, the 557-residue chain is CDP-diacylglycerol--glycerol-3-phosphate 3-phosphatidyltransferase, mitochondrial (557 aa).

A mitochondrion-targeting transit peptide spans 1-25 (MAAAGGAALWRRLAAWLPRGPPGLA). An ATP-binding site is contributed by 121-128 (ASLYLGTG). Positions 212-238 (TIGLQHIKVYLFDDNVILSGANLSDLY) constitute a PLD phosphodiesterase 1 domain. Catalysis depends on residues His-217, Lys-219, and Asp-224. The interval 322–346 (TFHSSQQGSSMLPQHDSEASEGLKP) is disordered. Over residues 323–333 (FHSSQQGSSML) the composition is skewed to polar residues. The span at 336–346 (HDSEASEGLKP) shows a compositional bias: basic and acidic residues. Residues 461-494 (AGWTFHAKGLWLYLAGSSLPCLTLIGSPNFGYRS) form the PLD phosphodiesterase 2 domain.

It belongs to the CDP-alcohol phosphatidyltransferase class-II family.

The protein localises to the mitochondrion. It carries out the reaction a CDP-1,2-diacyl-sn-glycerol + sn-glycerol 3-phosphate = a 1,2-diacyl-sn-glycero-3-phospho-(1'-sn-glycero-3'-phosphate) + CMP + H(+). It functions in the pathway phospholipid metabolism; phosphatidylglycerol biosynthesis; phosphatidylglycerol from CDP-diacylglycerol: step 1/2. With respect to regulation, activated by calcium and magnesium and inhibited by other bivalent cations. Its function is as follows. Functions in the biosynthesis of the anionic phospholipids phosphatidylglycerol and cardiolipin. The sequence is that of CDP-diacylglycerol--glycerol-3-phosphate 3-phosphatidyltransferase, mitochondrial (PGS1) from Gallus gallus (Chicken).